The primary structure comprises 172 residues: Myosin regulatory light chain 12B (172 aa).

A compositionally biased stretch (basic residues) spans 1–16 (MSSKKAKTKTTKKRPQ). Residues 1-20 (MSSKKAKTKTTKKRPQRATS) form a disordered region. The residue at position 19 (Thr19) is a Phosphothreonine; by MLCK and ZIPK/DAPK3. Ser20 carries the post-translational modification Phosphoserine; by MLCK and ZIPK/DAPK3. 3 consecutive EF-hand domains span residues 29–64 (SQIQ…LGKN), 98–133 (DPED…MGDR), and 134–169 (FTDE…GAKD). Ca(2+)-binding residues include Asp42, Asn44, Asp46, and Asp53.

As to quaternary structure, myosin is a hexamer of 2 heavy chains and 4 light chains: interacts with myosin heavy chain MYO19. Post-translationally, phosphorylation increases the actin-activated myosin ATPase activity and thereby regulates the contractile activity. It is required to generate the driving force in the migration of the cells but not necessary for localization of myosin-2 at the leading edge. Phosphorylation is reduced following epigallocatechin-3-O-gallate treatment.

Myosin regulatory subunit that plays an important role in regulation of both smooth muscle and nonmuscle cell contractile activity via its phosphorylation. Phosphorylation triggers actin polymerization in vascular smooth muscle. Implicated in cytokinesis, receptor capping, and cell locomotion. The protein is Myosin regulatory light chain 12B (Myl12b) of Rattus norvegicus (Rat).